We begin with the raw amino-acid sequence, 325 residues long: Phosphate-binding protein PstS (325 aa).

The first 20 residues, 1 to 20 (MKKWQLVGTTVLGASVLLGA), serve as a signal peptide directing secretion. The N-palmitoyl cysteine moiety is linked to residue cysteine 21. The S-diacylglycerol cysteine moiety is linked to residue cysteine 21. The interval 23-46 (GNDGGSGDGKDLKGSAKGEGSSTV) is disordered.

It belongs to the PstS family. The complex is composed of two ATP-binding proteins (PstB), two transmembrane proteins (PstC and PstA) and a solute-binding protein (PstS).

Its subcellular location is the cell membrane. In terms of biological role, part of the ABC transporter complex PstSACB involved in phosphate import. The polypeptide is Phosphate-binding protein PstS (pstS) (Staphylococcus epidermidis (strain ATCC 12228 / FDA PCI 1200)).